We begin with the raw amino-acid sequence, 241 residues long: Pyridoxine 5'-phosphate synthase (241 aa).

Position 7 (Asn7) interacts with 3-amino-2-oxopropyl phosphate. 1-deoxy-D-xylulose 5-phosphate is bound at residue 9 to 10 (DH). Arg18 serves as a coordination point for 3-amino-2-oxopropyl phosphate. The active-site Proton acceptor is the His43. 1-deoxy-D-xylulose 5-phosphate contacts are provided by Arg45 and His50. The Proton acceptor role is filled by Glu70. Thr100 provides a ligand contact to 1-deoxy-D-xylulose 5-phosphate. His191 serves as the catalytic Proton donor. 3-amino-2-oxopropyl phosphate-binding positions include Ser192 and 213-214 (GH).

It belongs to the PNP synthase family. In terms of assembly, homooctamer; tetramer of dimers.

Its subcellular location is the cytoplasm. The catalysed reaction is 3-amino-2-oxopropyl phosphate + 1-deoxy-D-xylulose 5-phosphate = pyridoxine 5'-phosphate + phosphate + 2 H2O + H(+). Its pathway is cofactor biosynthesis; pyridoxine 5'-phosphate biosynthesis; pyridoxine 5'-phosphate from D-erythrose 4-phosphate: step 5/5. In terms of biological role, catalyzes the complicated ring closure reaction between the two acyclic compounds 1-deoxy-D-xylulose-5-phosphate (DXP) and 3-amino-2-oxopropyl phosphate (1-amino-acetone-3-phosphate or AAP) to form pyridoxine 5'-phosphate (PNP) and inorganic phosphate. This is Pyridoxine 5'-phosphate synthase from Nitrosomonas eutropha (strain DSM 101675 / C91 / Nm57).